The sequence spans 475 residues: Endoglucanase A (475 aa).

The first 26 residues, 1-26 (MKKTTAFLLCFLMIFTALLPMQNANA), serve as a signal peptide directing secretion. The active site involves histidine 147. The active-site Proton donor is glutamate 195. The active-site Nucleophile is glutamate 332. The Dockerin domain maps to 409 to 474 (PVIVYGDYNN…LLGMVSKLPS (66 aa)).

The protein belongs to the glycosyl hydrolase 5 (cellulase A) family.

The enzyme catalyses Endohydrolysis of (1-&gt;4)-beta-D-glucosidic linkages in cellulose, lichenin and cereal beta-D-glucans.. In terms of biological role, the biological conversion of cellulose to glucose generally requires three types of hydrolytic enzymes: (1) Endoglucanases which cut internal beta-1,4-glucosidic bonds; (2) Exocellobiohydrolases that cut the disaccharide cellobiose from the non-reducing end of the cellulose polymer chain; (3) Beta-1,4-glucosidases which hydrolyze the cellobiose and other short cello-oligosaccharides to glucose. The sequence is that of Endoglucanase A (celCCA) from Ruminiclostridium cellulolyticum (strain ATCC 35319 / DSM 5812 / JCM 6584 / H10) (Clostridium cellulolyticum).